The primary structure comprises 510 residues: Inositol-3-phosphate synthase (510 aa).

NAD(+)-binding residues include Gly-70, Gly-71, Asn-72, Asn-73, Asp-143, Ile-180, Gln-190, Arg-193, Thr-230, Ala-231, Asn-232, Thr-233, Gly-281, Ser-282, Asp-306, Ser-309, Asn-340, Asn-341, Asp-342, Lys-355, Gly-393, Asp-394, Asp-422, and Ser-423.

It belongs to the myo-inositol 1-phosphate synthase family. Requires NAD(+) as cofactor.

It is found in the cytoplasm. The protein resides in the cytosol. It localises to the nucleus. The enzyme catalyses D-glucose 6-phosphate = 1D-myo-inositol 3-phosphate. It functions in the pathway polyol metabolism; myo-inositol biosynthesis; myo-inositol from D-glucose 6-phosphate: step 1/2. In terms of biological role, key enzyme in myo-inositol biosynthesis pathway that catalyzes the conversion of glucose 6-phosphate to 1-myo-inositol 1-phosphate in a NAD-dependent manner. This chain is Inositol-3-phosphate synthase, found in Sesamum indicum (Oriental sesame).